Reading from the N-terminus, the 685-residue chain is MSLTPTNEILFHYKSSVKVGELERYVITYHLYDGEEIPPDLNLNSLWLKVRNMNPLSYRAAYLMGPFMLYCDVKTAQYHHSQKIVASVDYPKFEPNVQTQQDFVAELSVHNIRQKYVWIADVMSQILFTTNTNVTYEVTIGTSKESVENPHDLPSHLGSYSPKLTVNRLTTLDLWNLPVQITTPQKKKHLVVLTHGLHSNVSTDLVYIMEQIYKAQKNYPHEQIVVKGYRGNVCQTEKGVKYLGTRLAEYIIQDLYDESIRKISFVGHSLGGLIQAFAIAYIYEVYPWFFKKVNPINFITLASPLLGIVTDNPAYIKVLLSFGVIGKTGQDLGLENDVEVGKPLLYLLSGLPLIEILRRFKRRTVYANAINDGIVPLYTASLLFLDYNDILEQLQKLKENSKKSPLINDASTPVNQDFFNKTFISPLTKMLSILAPQKFPTENGSEIPKVSFFESASSILLPPLPERAYIMDPDSRDPVIIHDKIYNEDDIPQSEFDIEDGFFGKKNILLQAFFAGKKERAKYRNLEETIARRWHEGMAWRKVVVALKPDAHNNIIVRRKFANAYGWPVIDHLIDVHFNGDDDDDNDENDDINSTQVVEPIQSVTEGKKKYRKAENIPQEYGWLNKVETNGVFDEGPTGMISTVGEIVEALAKRGFSAVIDRRNASEDPNDEVLRFEEMNSDLVQ.

Ser-269 functions as the Charge relay system in the catalytic mechanism.

The protein belongs to the putative lipase ROG1 family.

In Saccharomyces cerevisiae (strain ATCC 204508 / S288c) (Baker's yeast), this protein is Putative lipase ROG1 (ROG1).